The primary structure comprises 416 residues: Adenylosuccinate synthetase (416 aa).

GTP-binding positions include 13–19 and 41–43; these read GDEGKGK and GHT. Aspartate 14 acts as the Proton acceptor in catalysis. Residues aspartate 14 and glycine 41 each contribute to the Mg(2+) site. Residues 14–17, 39–42, threonine 126, arginine 140, glutamine 220, threonine 235, and arginine 299 each bind IMP; these read DEGK and NAGH. Residue histidine 42 is the Proton donor of the active site. Residue 295 to 301 coordinates substrate; sequence TTTGRRR. GTP is bound by residues arginine 301, 327–329, and 405–407; these read KLD and STS.

This sequence belongs to the adenylosuccinate synthetase family. Homodimer. The cofactor is Mg(2+).

It is found in the cytoplasm. It carries out the reaction IMP + L-aspartate + GTP = N(6)-(1,2-dicarboxyethyl)-AMP + GDP + phosphate + 2 H(+). Its pathway is purine metabolism; AMP biosynthesis via de novo pathway; AMP from IMP: step 1/2. Functionally, plays an important role in the de novo pathway of purine nucleotide biosynthesis. Catalyzes the first committed step in the biosynthesis of AMP from IMP. This Campylobacter curvus (strain 525.92) protein is Adenylosuccinate synthetase.